The sequence spans 350 residues: Phosphotriesterase-related protein (350 aa).

The a divalent metal cation site is built by H22, H24, E169, H201, H230, and D298.

The protein belongs to the metallo-dependent hydrolases superfamily. Phosphotriesterase family. It depends on a divalent metal cation as a cofactor.

The protein is Phosphotriesterase-related protein of Drosophila persimilis (Fruit fly).